A 204-amino-acid polypeptide reads, in one-letter code: uncharacterized protein (204 aa).

Residues 1–21 form the signal peptide; sequence MIKKFLLFAMLNIFLTNKAHS.

This is an uncharacterized protein from Borreliella burgdorferi (strain ATCC 35210 / DSM 4680 / CIP 102532 / B31) (Borrelia burgdorferi).